The chain runs to 1297 residues: Protein Atossa (1297 aa).

Disordered regions lie at residues 1-22 and 117-149; these read MIPTSVTNSPPPAGLGQNGASA and TNPYGSMGGSENRAVNGSGSTGSPSSSSLTHQR. Low complexity predominate over residues 133 to 144; that stretch reads GSGSTGSPSSSS. The segment at 174-182 is transactivation domain 1 (TAD1); that stretch reads VSLAINDLN. 5 disordered regions span residues 206-227, 287-311, 518-655, 704-741, and 1017-1048; these read SSAGGGTNNSSAASSPGSNSSD, TPTTTATATASSGASSSASRPKHGP, GLPH…ETQS, SNGTANGSTNGATDDGDDSDTTASEMEETSSCSLSSAD, and AAHKRRSRHLSDRSDRSSLGSDEQLSDEDLES. Low complexity-rich tracts occupy residues 213-226 and 287-305; these read NNSSAASSPGSNSS and TPTTTATATASSGASSSAS. A compositionally biased stretch (polar residues) spans 564 to 578; it reads SALTPTTTAGGSNCD. The segment covering 605-620 has biased composition (basic residues); it reads QKYRKRMQRRDKKRER. Low complexity-rich tracts occupy residues 643 to 655 and 706 to 716; these read SQTQSQTTSETQS and GTANGSTNGAT. Positions 717–731 are enriched in acidic residues; it reads DDGDDSDTTASEMEE. The tract at residues 1074 to 1132 is required for macropage invasion; it reads LLGNLEESLLQRRLMPKIEVMGFTLQLGASGGFCPTQVNIPAVSYFYELHGETLSTPYL. The tract at residues 1150–1158 is transactivation domain 2 (TAD2); it reads VQATLLNPI. Positions 1192 to 1213 are disordered; that stretch reads SQDQDEGHKVPRSPTVTSTTSK. Positions 1203 to 1212 are enriched in low complexity; it reads RSPTVTSTTS.

The protein belongs to the ATOS family. In terms of tissue distribution, expressed in macrophages.

Its subcellular location is the nucleus. Transcription regulator that synchronizes transcriptional and translational programs to promote macrophage invasion of tissues. Required in macrophages for their early invasion into the extended germband. Induces transcriptional expression of metabolic enzymes as well as of the translational regulator pths/DDX47. With pths/DDX47, adjusts transcription and translation of a subset of OXPHOS genes to increase mitochondrial bioenergetics and allow macrophage tissue invasion. The polypeptide is Protein Atossa (Drosophila melanogaster (Fruit fly)).